A 268-amino-acid polypeptide reads, in one-letter code: GTP cyclohydrolase 1 type 2 homolog (268 aa).

Residues His66, His67, Asp105, His227, and Glu231 each coordinate a divalent metal cation.

The protein belongs to the GTP cyclohydrolase I type 2/NIF3 family. As to quaternary structure, homohexamer.

This is GTP cyclohydrolase 1 type 2 homolog from Clostridium acetobutylicum (strain ATCC 824 / DSM 792 / JCM 1419 / IAM 19013 / LMG 5710 / NBRC 13948 / NRRL B-527 / VKM B-1787 / 2291 / W).